Reading from the N-terminus, the 108-residue chain is Small ribosomal subunit protein uS17 (108 aa).

This sequence belongs to the universal ribosomal protein uS17 family. Part of the 30S ribosomal subunit.

Functionally, one of the primary rRNA binding proteins, it binds specifically to the 5'-end of 16S ribosomal RNA. The protein is Small ribosomal subunit protein uS17 of Methanocorpusculum labreanum (strain ATCC 43576 / DSM 4855 / Z).